An 84-amino-acid chain; its full sequence is Replication regulatory protein repA2 (84 aa).

Over residues 1–13 (MSQTENAVTSSSG) the composition is skewed to polar residues. The disordered stretch occupies residues 1–31 (MSQTENAVTSSSGAKRAYRKGNPLSDAEKQR).

In terms of biological role, this protein is involved in the determination of copy number in gene replication. It binds to the repA promoter thus inhibiting the synthesis of the mRNA for the initiator protein repA. This Escherichia coli O157:H7 protein is Replication regulatory protein repA2 (repA2).